The sequence spans 55 residues: MAKKTDTRIVINMACTDCGERNYTTEKNKRNDPRRIELSKYCPRCREAKVHRETK.

This sequence belongs to the bacterial ribosomal protein bL33 family.

In Dehalococcoides mccartyi (strain ATCC BAA-2100 / JCM 16839 / KCTC 5957 / BAV1), this protein is Large ribosomal subunit protein bL33.